The chain runs to 287 residues: Elongation factor Ts (287 aa).

An involved in Mg(2+) ion dislocation from EF-Tu region spans residues 80-83 (TDFL).

The protein belongs to the EF-Ts family.

The protein localises to the cytoplasm. Functionally, associates with the EF-Tu.GDP complex and induces the exchange of GDP to GTP. It remains bound to the aminoacyl-tRNA.EF-Tu.GTP complex up to the GTP hydrolysis stage on the ribosome. The sequence is that of Elongation factor Ts from Pseudomonas fluorescens (strain Pf0-1).